A 214-amino-acid polypeptide reads, in one-letter code: GTP-binding protein ypt3 (214 aa).

17–24 (GDSGVGKS) contacts GTP. Residues 39–47 (SKSTIGVEF) carry the Effector region motif. The residue at position 42 (T42) is a Phosphothreonine. GTP is bound by residues 65 to 69 (DTAGQ) and 123 to 126 (NKTD). Residues C213 and C214 are each lipidated (S-geranylgeranyl cysteine).

The protein belongs to the small GTPase superfamily. Rab family.

The protein resides in the cell membrane. Its subcellular location is the endosome membrane. The protein localises to the golgi apparatus membrane. It localises to the cytoplasm. It is found in the nucleus. Its function is as follows. Has a role in retrograde traffricking of proteins from the endosome to the Golgi. Involved in the secretory pathway where it has a role in acid phosphatase secretion. The polypeptide is GTP-binding protein ypt3 (ypt3) (Schizosaccharomyces pombe (strain 972 / ATCC 24843) (Fission yeast)).